The following is a 1377-amino-acid chain: Endoribonuclease Dicer homolog 2b (1377 aa).

Gly residues predominate over residues 1–15; the sequence is MGGPLTAAGGRGDGG. Residues 1–30 form a disordered region; sequence MGGPLTAAGGRGDGGAKAVEPLRPPPPPDP. In terms of domain architecture, Helicase ATP-binding spans 41–222; sequence ALERAVRGNT…HNYSKQISEI (182 aa). Residue 54 to 61 coordinates ATP; it reads LETGSGKT. Residues 163-166 carry the DECH box motif; the sequence is DECH. Residues 388-561 enclose the Helicase C-terminal domain; that stretch reads TLLQYRHMQD…DTYYRVESTP (174 aa). The region spanning 534–626 is the Dicer dsRNA-binding fold domain; that stretch reads SLRLGSISCQ…LPELDVPCDE (93 aa). A PAZ domain is found at 798–913; it reads RDIDLLQTKD…LPPELCRIIM (116 aa). 2 consecutive RNase III domains span residues 940–1095 and 1132–1276; these read SVKL…STAG and VRSL…LDSK. Residues Glu-1171, Asp-1262, and Glu-1265 each coordinate Mg(2+). Residues 1302-1367 enclose the DRBM domain; that stretch reads DPVKGLQEFC…SKAVLKDLIA (66 aa).

Belongs to the helicase family. Dicer subfamily. In terms of assembly, may interact with ARGONAUTE1 or PINHEAD through their common PAZ domains. It depends on Mg(2+) as a cofactor. The cofactor is Mn(2+).

Its subcellular location is the nucleus. Probably involved in the RNA silencing pathway. May cleave double-stranded RNA to produce short 21-24 nucleotides (nt) RNAs which target the selective destruction of complementary RNAs. The protein is Endoribonuclease Dicer homolog 2b (DCL2B) of Oryza sativa subsp. japonica (Rice).